A 61-amino-acid polypeptide reads, in one-letter code: Small ribosomal subunit protein uS14 (61 aa).

Zn(2+) contacts are provided by C24, C27, C40, and C43.

The protein belongs to the universal ribosomal protein uS14 family. Zinc-binding uS14 subfamily. In terms of assembly, part of the 30S ribosomal subunit. Contacts proteins S3 and S10. The cofactor is Zn(2+).

Functionally, binds 16S rRNA, required for the assembly of 30S particles and may also be responsible for determining the conformation of the 16S rRNA at the A site. This chain is Small ribosomal subunit protein uS14, found in Bifidobacterium longum (strain DJO10A).